The following is a 517-amino-acid chain: Anthranilate--CoA ligase (517 aa).

AMP is bound at residue 161–172 (LQYTSGSTGAPK).

It belongs to the ATP-dependent AMP-binding enzyme family. In terms of assembly, monomer.

The catalysed reaction is anthranilate + ATP + CoA = anthraniloyl-CoA + AMP + diphosphate. Functionally, catalyzes the formation of anthraniloyl-CoA, which is the priming step for entry into the Pseudomonas quinolone signal (PQS) biosynthetic pathway. Also active on a variety of aromatic substrates, including benzoate and chloro and fluoro derivatives of anthranilate. The polypeptide is Anthranilate--CoA ligase (pqsA) (Pseudomonas aeruginosa (strain ATCC 15692 / DSM 22644 / CIP 104116 / JCM 14847 / LMG 12228 / 1C / PRS 101 / PAO1)).